Here is a 355-residue protein sequence, read N- to C-terminus: Elongation factor Ts, mitochondrial (355 aa).

Residues methionine 1 to valine 46 constitute a mitochondrion transit peptide.

Belongs to the EF-Ts family.

It is found in the mitochondrion. Its function is as follows. Associates with the EF-Tu.GDP complex and induces the exchange of GDP to GTP. It remains bound to the aminoacyl-tRNA.EF-Tu.GTP complex up to the GTP hydrolysis stage on the ribosome. In Dictyostelium discoideum (Social amoeba), this protein is Elongation factor Ts, mitochondrial (tsfm).